Consider the following 226-residue polypeptide: Ribosomal RNA small subunit methyltransferase Nep1 (226 aa).

S-adenosyl-L-methionine contacts are provided by residues Gly176, Gly181, and 197 to 202; that span reads IYEESL.

This sequence belongs to the class IV-like SAM-binding methyltransferase superfamily. RNA methyltransferase NEP1 family. Homodimer.

It catalyses the reaction a pseudouridine in rRNA + S-adenosyl-L-methionine = an N(1)-methylpseudouridine in rRNA + S-adenosyl-L-homocysteine + H(+). Methyltransferase involved in ribosomal biogenesis. Specifically catalyzes the N1-methylation of the pseudouridine corresponding to position 914 in M.jannaschii 16S rRNA. The chain is Ribosomal RNA small subunit methyltransferase Nep1 from Methanothrix thermoacetophila (strain DSM 6194 / JCM 14653 / NBRC 101360 / PT) (Methanosaeta thermophila).